The sequence spans 416 residues: TNF receptor-associated factor 1 (416 aa).

Residues 1 to 24 (MASSSGSSPRPAPDENEFPFGCPP) form a disordered region. The residue at position 146 (serine 146) is a Phosphoserine. Positions 182 to 264 (MKEKLLAELE…QSLRLMEEAS (83 aa)) form a coiled coil. Residues lysine 185 and lysine 193 each participate in a glycyl lysine isopeptide (Lys-Gly) (interchain with G-Cter in ubiquitin) cross-link. The MATH domain maps to 266–412 (DGTFLWKITN…DDTMFLKCIV (147 aa)).

Homotrimer. Heterotrimer with TRAF2. Interacts with TNFRSF1A/TNFR1, TNFRSF1B/TNFR2, TNFRSF4, TNFRSF5/CD40, TNFRSF8/CD30, TNFRSF9/CD137, TNFRSF11A/RANK, TNFRSF13C, TNFRSF18/AITR, TNFRSF17/BCMA, TNFRSF19/TROY, TNFRSF19L/RELT, XEDAR, EDAR, Epstein-Barr virus BNFL1/LMP-1, TANK/ITRAF, TRAIP and RIPK2. Interacts with BIRC2 and BIRC3 N-terminus; a single BIRC2 or BIRC3 molecule interacts with a heterotrimer formed by TRAF1 and TRAF2. Interacts with NFATC2IP, TRAFD1 and with HIVEP3. Interacts with MAP3K14. Interacts with GPS2. Post-translationally, polyubiquitinated by BIRC2 and/or BIRC3, leading to its subsequent proteasomal degradation. Ubiquitinated by the SCF(FBXL2) complex, leading to its degradation by the proteasome.

In terms of biological role, adapter molecule that regulates the activation of NF-kappa-B and JNK. Plays a role in the regulation of cell survival and apoptosis. The heterotrimer formed by TRAF1 and TRAF2 is part of a E3 ubiquitin-protein ligase complex that promotes ubiquitination of target proteins, such as MAP3K14. The TRAF1/TRAF2 complex recruits the antiapoptotic E3 protein-ubiquitin ligases BIRC2 and BIRC3 to TNFRSF1B/TNFR2. This is TNF receptor-associated factor 1 (TRAF1) from Homo sapiens (Human).